The primary structure comprises 368 residues: Phosphate acyltransferase (368 aa).

Belongs to the PlsX family. As to quaternary structure, homodimer. Probably interacts with PlsY.

Its subcellular location is the cytoplasm. It catalyses the reaction a fatty acyl-[ACP] + phosphate = an acyl phosphate + holo-[ACP]. Its pathway is lipid metabolism; phospholipid metabolism. Catalyzes the reversible formation of acyl-phosphate (acyl-PO(4)) from acyl-[acyl-carrier-protein] (acyl-ACP). This enzyme utilizes acyl-ACP as fatty acyl donor, but not acyl-CoA. The chain is Phosphate acyltransferase from Methylibium petroleiphilum (strain ATCC BAA-1232 / LMG 22953 / PM1).